The following is a 291-amino-acid chain: Methylsterol monooxygenase 1 (291 aa).

A run of 2 helical transmembrane segments spans residues 55–75 (LIVH…FQFL) and 100–120 (MLLF…YYFT). Residues 145–274 (CAVIEDTWHY…FTWWDRLFDT (130 aa)) form the Fatty acid hydroxylase domain. The short motif at 157–161 (HRALH) is the Histidine box-1 element. Positions 170 to 174 (HKVHH) match the Histidine box-2 motif. The chain crosses the membrane as a helical span at residues 199–219 (FFIGTMVFCNHMILLWAWVTF). The short motif at 249-255 (FHDFHHM) is the Histidine box-3 element.

This sequence belongs to the sterol desaturase family. Requires Fe cation as cofactor.

Its subcellular location is the endoplasmic reticulum membrane. It carries out the reaction 4,4-dimethyl-5alpha-cholest-7-en-3beta-ol + 6 Fe(II)-[cytochrome b5] + 3 O2 + 5 H(+) = 4alpha-carboxy-4beta-methyl-5alpha-cholest-7-ene-3beta-ol + 6 Fe(III)-[cytochrome b5] + 4 H2O. It functions in the pathway steroid biosynthesis; zymosterol biosynthesis; zymosterol from lanosterol: step 3/6. In terms of biological role, catalyzes the first step in the removal of the two C-4 methyl groups of 4,4-dimethylzymosterol. The chain is Methylsterol monooxygenase 1 (msmo1) from Danio rerio (Zebrafish).